The chain runs to 263 residues: Shikimate dehydrogenase (NADP(+)) (263 aa).

Residues 16–18 (SKS) and T65 contribute to the shikimate site. Residue K69 is the Proton acceptor of the active site. Residues N90 and D105 each contribute to the shikimate site. Residues 125-129 (GSGGS) and L208 contribute to the NADP(+) site. Y210 is a shikimate binding site. G230 serves as a coordination point for NADP(+).

The protein belongs to the shikimate dehydrogenase family. As to quaternary structure, homodimer.

It carries out the reaction shikimate + NADP(+) = 3-dehydroshikimate + NADPH + H(+). It participates in metabolic intermediate biosynthesis; chorismate biosynthesis; chorismate from D-erythrose 4-phosphate and phosphoenolpyruvate: step 4/7. Its function is as follows. Involved in the biosynthesis of the chorismate, which leads to the biosynthesis of aromatic amino acids. Catalyzes the reversible NADPH linked reduction of 3-dehydroshikimate (DHSA) to yield shikimate (SA). The chain is Shikimate dehydrogenase (NADP(+)) from Helicobacter acinonychis (strain Sheeba).